Consider the following 566-residue polypeptide: Tissue-type plasminogen activator (566 aa).

The signal sequence occupies residues 1-21 (MMSAMKTEFLCVLLLCGAVFT). A propeptide spanning residues 22–33 (SPSQETYRRLRR) is cleaved from the precursor. Positions 34 to 36 (GAR) are cleaved as a propeptide — removed by plasmin. Residues 40 to 82 (VTCRDGKTQMTYRQHDSWLRPLLRGNQVEHCWCDGGRAQCHSV) enclose the Fibronectin type-I domain. Disulfide bonds link cysteine 42–cysteine 72, cysteine 70–cysteine 79, cysteine 87–cysteine 98, cysteine 92–cysteine 109, cysteine 111–cysteine 120, cysteine 128–cysteine 209, cysteine 149–cysteine 191, cysteine 180–cysteine 204, cysteine 219–cysteine 300, cysteine 240–cysteine 282, cysteine 271–cysteine 295, cysteine 303–cysteine 434, cysteine 346–cysteine 362, cysteine 354–cysteine 423, cysteine 448–cysteine 523, cysteine 480–cysteine 496, and cysteine 513–cysteine 541. The interval 43–53 (RDGKTQMTYRQ) is important for binding to annexin A2. The 39-residue stretch at 83–121 (PVRSCSEPWCFNGGTCRQALYSSDFVCQCPEGFMGKLCE) folds into the EGF-like domain. 2 Kringle domains span residues 128-209 (CYKD…TPAC) and 219-300 (CYTG…VPQC). Residue asparagine 153 is glycosylated (N-linked (GlcNAc...) asparagine). A Peptidase S1 domain is found at 315–565 (IKGGLFADIT…YLDWIRDNTR (251 aa)). Active-site charge relay system residues include histidine 361 and aspartate 410. Asparagine 487 is a glycosylation site (N-linked (GlcNAc...) asparagine). Residue serine 517 is the Charge relay system of the active site.

It belongs to the peptidase S1 family. Heterodimer of chain A and chain B held by a disulfide bond. Binds to fibrin with high affinity. This interaction leads to an increase in the catalytic efficiency of the enzyme due to an increase in affinity for plasminogen. Similarly, binding to heparin increases the activation of plasminogen. Binds to annexin A2, cytokeratin-8, fibronectin and laminin. Binds to mannose receptor and the low-density lipoprotein receptor-related protein (LRP1); these proteins are involved in TPA clearance. Binds LRP1B; binding is followed by internalization and degradation. Forms heterodimer with SERPINA5. Interacts with SERPINE1. In complex with SERPINE1, interacts with SORL1. Post-translationally, the single chain, almost fully active enzyme, can be further processed into a two-chain fully active form by a cleavage after Arg-314 catalyzed by plasmin, tissue kallikrein or factor Xa.

It is found in the secreted. The protein localises to the extracellular space. The catalysed reaction is Specific cleavage of Arg-|-Val bond in plasminogen to form plasmin.. Inhibited by SERPINA5. Inhibited by SERPINE1. Converts the abundant, but inactive, zymogen plasminogen to plasmin by hydrolyzing a single Arg-Val bond in plasminogen. By controlling plasmin-mediated proteolysis, it plays an important role in tissue remodeling and degradation, in cell migration and many other physiopathological events. During oocyte activation, plays a role in cortical granule reaction in the zona reaction, which contributes to the block to polyspermy. In Bos taurus (Bovine), this protein is Tissue-type plasminogen activator (PLAT).